The chain runs to 98 residues: Keratin-associated protein 3-3 (98 aa).

3 tandem repeats follow at residues 3-7, 47-51, and 89-93. The segment at 3-59 is 3 X 5 AA repeats of C-C-X(3); that stretch reads CCASRGCSVPTGPATTICSSDKSCRCGVCLPSTCPHTVWLLEPTCCDNCPPPCHIPQ.

Belongs to the KRTAP type 3 family. As to quaternary structure, interacts with hair keratins. In terms of tissue distribution, localized to the upper cortex of the hair shaft.

Functionally, in the hair cortex, hair keratin intermediate filaments are embedded in an interfilamentous matrix, consisting of hair keratin-associated proteins (KRTAP), which are essential for the formation of a rigid and resistant hair shaft through their extensive disulfide bond cross-linking with abundant cysteine residues of hair keratins. The matrix proteins include the high-sulfur and high-glycine-tyrosine keratins. The polypeptide is Keratin-associated protein 3-3 (KRTAP3-3) (Homo sapiens (Human)).